We begin with the raw amino-acid sequence, 382 residues long: V-type proton ATPase subunit C 1 (382 aa).

T2 carries the post-translational modification N-acetylthreonine.

The protein belongs to the V-ATPase C subunit family. V-ATPase is a heteromultimeric enzyme made up of two complexes: the ATP-hydrolytic V1 complex and the proton translocation V0 complex. The V1 complex consists of three catalytic AB heterodimers that form a heterohexamer, three peripheral stalks each consisting of EG heterodimers, one central rotor including subunits D and F, and the regulatory subunits C and H. The proton translocation complex V0 consists of the proton transport subunit a, a ring of proteolipid subunits c9c'', rotary subunit d, subunits e and f, and the accessory subunits ATP6AP1/Ac45 and ATP6AP2/PRR.

The protein resides in the cytoplasmic vesicle. Its subcellular location is the secretory vesicle. It localises to the synaptic vesicle membrane. The protein localises to the clathrin-coated vesicle membrane. Functionally, subunit of the V1 complex of vacuolar(H+)-ATPase (V-ATPase), a multisubunit enzyme composed of a peripheral complex (V1) that hydrolyzes ATP and a membrane integral complex (V0) that translocates protons. V-ATPase is responsible for acidifying and maintaining the pH of intracellular compartments and in some cell types, is targeted to the plasma membrane, where it is responsible for acidifying the extracellular environment. Subunit C is necessary for the assembly of the catalytic sector of the enzyme and is likely to have a specific function in its catalytic activity. This Macaca fascicularis (Crab-eating macaque) protein is V-type proton ATPase subunit C 1 (ATP6V1C1).